We begin with the raw amino-acid sequence, 623 residues long: NADPH-dependent diflavin oxidoreductase 1 (623 aa).

In terms of domain architecture, Flavodoxin-like spans 8–153 (LLVLYASQTG…TLDPWMLSLW (146 aa)). FMN-binding positions include 14–19 (SQTGNA), 62–65 (STTG), and Asp135. The FAD-binding FR-type domain maps to 221-467 (KPDCFLKMTR…SLPAPSQSLP (247 aa)). Residues Arg369, 399-402 (RAFS), and 433-436 (GLCS) contribute to the FAD site. Residues Thr475, 541–542 (SR), 547–551 (KVYVQ), and Asp583 contribute to the NADP(+) site. Trp622 is an FAD binding site.

The protein belongs to the NADPH-dependent diflavin oxidoreductase NDOR1 family. In the N-terminal section; belongs to the flavodoxin family. This sequence in the C-terminal section; belongs to the flavoprotein pyridine nucleotide cytochrome reductase family. In terms of assembly, interacts with At5g18400. FAD is required as a cofactor. FMN serves as cofactor. As to expression, widely expressed.

The protein localises to the cytoplasm. It is found in the nucleus. It catalyses the reaction 2 oxidized [2Fe-2S]-[protein] + NADPH = 2 reduced [2Fe-2S]-[protein] + NADP(+) + H(+). NADPH-dependent reductase which is a central component of the cytosolic iron-sulfur (Fe-S) protein assembly (CIA) machinery. Transfers electrons from NADPH via its FAD and FMN prosthetic groups to the [2Fe-2S] cluster of the anamorsin/DRE2 homolog, another key component of the CIA machinery. In turn, this reduced cluster provides electrons for assembly of cytosolic iron-sulfur cluster proteins. Catalyzes the NADP-dependent reduction of cytochrome c, but not cytochrome P450 in vitro. Required for embryo development. In Arabidopsis thaliana (Mouse-ear cress), this protein is NADPH-dependent diflavin oxidoreductase 1 (ATR3).